The sequence spans 461 residues: Ribonuclease inhibitor (461 aa).

Position 2 is an N-acetylserine (Ser2). Positions 2–11 are 2 X 5 AA tandem repeats of S-L-D-I-Q; sequence SLDIQSLDIQ. 15 LRR repeats span residues 20–48, 49–76, 77–105, 106–133, 134–162, 163–190, 191–219, 220–247, 248–276, 277–304, 305–333, 334–361, 362–390, 391–418, and 419–447; these read WAELLPLLQQCQVVRLDDCGLTEARCKDI, SSALRVNPALAELNLRSNELGDVGVHCV, LQGLQTPSCKIQKLSLQNCCLTGAGCGVL, SSTLRTLPTLQELHLSDNLLGDAGLQLL, CEGLLDPQCRLEKLQLEYCSLSAASCEPL, ASVLRAKPDFKELTVSNNDINEAGVRVL, CQGLKDSPCQLEALKLESCGVTSDNCRDL, CGIVASKASLRELALGSNKLGDVGMAEL, CPGLLHPSSRLRTLWIWECGITAKGCGDL, CRVLRAKESLKELSLAGNELGDEGARLL, CETLLEPGCQLESLWVKSCSFTAACCSHF, SSVLAQNRFLLELQISNNRLEDAGVREL, CQGLGQPGSVLRVLWLADCDVSDSSCSSL, AATLLANHSLRELDLSNNCLGDAGILQL, and VESVRQPGCLLEQLVLYDIYWSEEMEDRL. Thr82 bears the Phosphothreonine mark. Ser91 carries the phosphoserine modification.

As to quaternary structure, forms high-affinity heterodimers with RNASE1, ANG and RNASE2. Post-translationally, the N-terminus is blocked. At least 30 of the 32 cysteine residues are in the reduced form.

It is found in the cytoplasm. The protein resides in the nucleus. In terms of biological role, ribonuclease inhibitor which inhibits RNASE1, RNASE2 and angiogenin (ANG). May play a role in redox homeostasis. Required to inhibit the cytotoxic tRNA ribonuclease activity of ANG in the cytoplasm in absence of stress. Relocates to the nucleus in response to stress, relieving inhibition of ANG in the cytoplasm, and inhibiting the angiogenic activity of ANG in the nucleus. This is Ribonuclease inhibitor from Homo sapiens (Human).